We begin with the raw amino-acid sequence, 140 residues long: MVNLGFVIAEFNRDLTYMMEKLAEEHAQFLGANVVCKVMVPGSFDMPLAIKTLLKKDNIDAVVTIGCVIEGDTEHDEIVVQNAARKIADLSLEFEKPVALGISGPGMTRMQAEDRIDYGKSAVEAAVKMVKRINDIKNSN.

5-amino-6-(D-ribitylamino)uracil-binding positions include phenylalanine 11, 43–45 (SFD), and 67–69 (CVI). (2S)-2-hydroxy-3-oxobutyl phosphate is bound at residue 72–73 (DT). The Proton donor role is filled by histidine 75. 5-amino-6-(D-ribitylamino)uracil is bound at residue leucine 100. Arginine 115 contributes to the (2S)-2-hydroxy-3-oxobutyl phosphate binding site.

It belongs to the DMRL synthase family. Forms an icosahedral capsid composed of 60 subunits, arranged as a dodecamer of pentamers.

The enzyme catalyses (2S)-2-hydroxy-3-oxobutyl phosphate + 5-amino-6-(D-ribitylamino)uracil = 6,7-dimethyl-8-(1-D-ribityl)lumazine + phosphate + 2 H2O + H(+). It functions in the pathway cofactor biosynthesis; riboflavin biosynthesis; riboflavin from 2-hydroxy-3-oxobutyl phosphate and 5-amino-6-(D-ribitylamino)uracil: step 1/2. Functionally, catalyzes the formation of 6,7-dimethyl-8-ribityllumazine by condensation of 5-amino-6-(D-ribitylamino)uracil with 3,4-dihydroxy-2-butanone 4-phosphate. This is the penultimate step in the biosynthesis of riboflavin. The chain is 6,7-dimethyl-8-ribityllumazine synthase from Methanococcus vannielii (strain ATCC 35089 / DSM 1224 / JCM 13029 / OCM 148 / SB).